A 237-amino-acid polypeptide reads, in one-letter code: 2,3,4,5-tetrahydropyridine-2,6-dicarboxylate N-acetyltransferase (237 aa).

The protein belongs to the transferase hexapeptide repeat family. DapH subfamily.

The enzyme catalyses (S)-2,3,4,5-tetrahydrodipicolinate + acetyl-CoA + H2O = L-2-acetamido-6-oxoheptanedioate + CoA. Its pathway is amino-acid biosynthesis; L-lysine biosynthesis via DAP pathway; LL-2,6-diaminopimelate from (S)-tetrahydrodipicolinate (acetylase route): step 1/3. In terms of biological role, catalyzes the transfer of an acetyl group from acetyl-CoA to tetrahydrodipicolinate. This Limosilactobacillus fermentum (strain NBRC 3956 / LMG 18251) (Lactobacillus fermentum) protein is 2,3,4,5-tetrahydropyridine-2,6-dicarboxylate N-acetyltransferase.